The sequence spans 397 residues: CCA-adding enzyme (397 aa).

ATP-binding residues include Gly26 and Arg29. CTP is bound by residues Gly26 and Arg29. Asp39 and Asp41 together coordinate Mg(2+). 5 residues coordinate ATP: Arg110, Asp153, Arg156, Arg159, and Arg162. CTP contacts are provided by Arg110, Asp153, Arg156, Arg159, and Arg162.

The protein belongs to the tRNA nucleotidyltransferase/poly(A) polymerase family. Bacterial CCA-adding enzyme type 3 subfamily. As to quaternary structure, homodimer. Requires Mg(2+) as cofactor.

It carries out the reaction a tRNA precursor + 2 CTP + ATP = a tRNA with a 3' CCA end + 3 diphosphate. The enzyme catalyses a tRNA with a 3' CCA end + 2 CTP + ATP = a tRNA with a 3' CCACCA end + 3 diphosphate. In terms of biological role, catalyzes the addition and repair of the essential 3'-terminal CCA sequence in tRNAs without using a nucleic acid template. Adds these three nucleotides in the order of C, C, and A to the tRNA nucleotide-73, using CTP and ATP as substrates and producing inorganic pyrophosphate. tRNA 3'-terminal CCA addition is required both for tRNA processing and repair. Also involved in tRNA surveillance by mediating tandem CCA addition to generate a CCACCA at the 3' terminus of unstable tRNAs. While stable tRNAs receive only 3'-terminal CCA, unstable tRNAs are marked with CCACCA and rapidly degraded. The protein is CCA-adding enzyme of Bacillus cereus (strain 03BB102).